The chain runs to 367 residues: Chorismate synthase (367 aa).

Arg-48 contacts NADP(+). FMN is bound by residues 125–127 (RAS), Gly-290, 305–309 (KPTSS), and Arg-333.

The protein belongs to the chorismate synthase family. In terms of assembly, homotetramer. The cofactor is FMNH2.

It carries out the reaction 5-O-(1-carboxyvinyl)-3-phosphoshikimate = chorismate + phosphate. It functions in the pathway metabolic intermediate biosynthesis; chorismate biosynthesis; chorismate from D-erythrose 4-phosphate and phosphoenolpyruvate: step 7/7. Catalyzes the anti-1,4-elimination of the C-3 phosphate and the C-6 proR hydrogen from 5-enolpyruvylshikimate-3-phosphate (EPSP) to yield chorismate, which is the branch point compound that serves as the starting substrate for the three terminal pathways of aromatic amino acid biosynthesis. This reaction introduces a second double bond into the aromatic ring system. The protein is Chorismate synthase of Protochlamydia amoebophila (strain UWE25).